A 258-amino-acid polypeptide reads, in one-letter code: Deoxyribose-phosphate aldolase (258 aa).

Catalysis depends on Asp-102, which acts as the Proton donor/acceptor. Lys-165 functions as the Schiff-base intermediate with acetaldehyde in the catalytic mechanism. Lys-199 acts as the Proton donor/acceptor in catalysis.

The protein belongs to the DeoC/FbaB aldolase family. DeoC type 2 subfamily.

The protein localises to the cytoplasm. It carries out the reaction 2-deoxy-D-ribose 5-phosphate = D-glyceraldehyde 3-phosphate + acetaldehyde. It functions in the pathway carbohydrate degradation; 2-deoxy-D-ribose 1-phosphate degradation; D-glyceraldehyde 3-phosphate and acetaldehyde from 2-deoxy-alpha-D-ribose 1-phosphate: step 2/2. Functionally, catalyzes a reversible aldol reaction between acetaldehyde and D-glyceraldehyde 3-phosphate to generate 2-deoxy-D-ribose 5-phosphate. In Aliivibrio salmonicida (strain LFI1238) (Vibrio salmonicida (strain LFI1238)), this protein is Deoxyribose-phosphate aldolase.